Here is a 258-residue protein sequence, read N- to C-terminus: Imidazole glycerol phosphate synthase subunit HisF (258 aa).

Residues Asp12 and Asp131 contribute to the active site.

The protein belongs to the HisA/HisF family. In terms of assembly, heterodimer of HisH and HisF.

The protein localises to the cytoplasm. The enzyme catalyses 5-[(5-phospho-1-deoxy-D-ribulos-1-ylimino)methylamino]-1-(5-phospho-beta-D-ribosyl)imidazole-4-carboxamide + L-glutamine = D-erythro-1-(imidazol-4-yl)glycerol 3-phosphate + 5-amino-1-(5-phospho-beta-D-ribosyl)imidazole-4-carboxamide + L-glutamate + H(+). It participates in amino-acid biosynthesis; L-histidine biosynthesis; L-histidine from 5-phospho-alpha-D-ribose 1-diphosphate: step 5/9. IGPS catalyzes the conversion of PRFAR and glutamine to IGP, AICAR and glutamate. The HisF subunit catalyzes the cyclization activity that produces IGP and AICAR from PRFAR using the ammonia provided by the HisH subunit. In Sinorhizobium medicae (strain WSM419) (Ensifer medicae), this protein is Imidazole glycerol phosphate synthase subunit HisF.